The following is a 429-amino-acid chain: Enolase (429 aa).

Glutamine 163 is a (2R)-2-phosphoglycerate binding site. Catalysis depends on glutamate 205, which acts as the Proton donor. Mg(2+) contacts are provided by aspartate 242, glutamate 286, and aspartate 313. (2R)-2-phosphoglycerate is bound by residues lysine 338, arginine 367, serine 368, and lysine 389. The Proton acceptor role is filled by lysine 338.

This sequence belongs to the enolase family. The cofactor is Mg(2+).

It is found in the cytoplasm. It localises to the secreted. The protein resides in the cell surface. It catalyses the reaction (2R)-2-phosphoglycerate = phosphoenolpyruvate + H2O. It functions in the pathway carbohydrate degradation; glycolysis; pyruvate from D-glyceraldehyde 3-phosphate: step 4/5. In terms of biological role, catalyzes the reversible conversion of 2-phosphoglycerate (2-PG) into phosphoenolpyruvate (PEP). It is essential for the degradation of carbohydrates via glycolysis. This is Enolase from Geobacter metallireducens (strain ATCC 53774 / DSM 7210 / GS-15).